We begin with the raw amino-acid sequence, 281 residues long: Large ribosomal subunit protein uL2 (281 aa).

The disordered stretch occupies residues 223 to 255 (TVRGSVMNPNDHPHGGGEGRAPIGRKSPVTPWG).

The protein belongs to the universal ribosomal protein uL2 family. As to quaternary structure, part of the 50S ribosomal subunit. Forms a bridge to the 30S subunit in the 70S ribosome.

One of the primary rRNA binding proteins. Required for association of the 30S and 50S subunits to form the 70S ribosome, for tRNA binding and peptide bond formation. It has been suggested to have peptidyltransferase activity; this is somewhat controversial. Makes several contacts with the 16S rRNA in the 70S ribosome. This chain is Large ribosomal subunit protein uL2, found in Mycoplasma capricolum subsp. capricolum (strain California kid / ATCC 27343 / NCTC 10154).